The following is a 245-amino-acid chain: 2,3-bisphosphoglycerate-dependent phosphoglycerate mutase (245 aa).

Substrate contacts are provided by residues 9–16 (RHGESEWN), 22–23 (TG), arginine 61, 88–91 (ERHY), lysine 99, 115–116 (RR), and 181–182 (GN). Histidine 10 functions as the Tele-phosphohistidine intermediate in the catalytic mechanism. Glutamate 88 acts as the Proton donor/acceptor in catalysis.

The protein belongs to the phosphoglycerate mutase family. BPG-dependent PGAM subfamily.

It catalyses the reaction (2R)-2-phosphoglycerate = (2R)-3-phosphoglycerate. Its pathway is carbohydrate degradation; glycolysis; pyruvate from D-glyceraldehyde 3-phosphate: step 3/5. In terms of biological role, catalyzes the interconversion of 2-phosphoglycerate and 3-phosphoglycerate. The polypeptide is 2,3-bisphosphoglycerate-dependent phosphoglycerate mutase (Nocardia farcinica (strain IFM 10152)).